We begin with the raw amino-acid sequence, 238 residues long: Ribonuclease PH (238 aa).

Residues arginine 86 and glycine 124–arginine 126 each bind phosphate.

The protein belongs to the RNase PH family. Homohexameric ring arranged as a trimer of dimers.

The catalysed reaction is tRNA(n+1) + phosphate = tRNA(n) + a ribonucleoside 5'-diphosphate. In terms of biological role, phosphorolytic 3'-5' exoribonuclease that plays an important role in tRNA 3'-end maturation. Removes nucleotide residues following the 3'-CCA terminus of tRNAs; can also add nucleotides to the ends of RNA molecules by using nucleoside diphosphates as substrates, but this may not be physiologically important. Probably plays a role in initiation of 16S rRNA degradation (leading to ribosome degradation) during starvation. This Acinetobacter baumannii (strain AB307-0294) protein is Ribonuclease PH.